Here is a 1369-residue protein sequence, read N- to C-terminus: Microtubule-associated tumor suppressor candidate 2 (1369 aa).

Disordered regions lie at residues 180-262 (ASSS…TQTV), 374-442 (GRGN…FIPN), 477-509 (GENK…VAEN), 582-627 (NTSP…EERT), 791-839 (RSSA…LRPP), 861-992 (SSVS…QARE), and 1331-1369 (WKLQ…TTPR). Composition is skewed to polar residues over residues 246-262 (PSTS…TQTV) and 392-401 (LHTTPKQGSA). The interval 641 to 980 (RPKIITYIRR…PKQRTAAARN (340 aa)) is mediates interaction with MAPRE1. Positions 801–890 (GPITTATSLY…TRSTFGNEEQ (90 aa)) are sufficient for interaction with KIF2C. The localization to the growing distal tip of microtubules stretch occupies residues 801–1150 (GPITTATSLY…HDAALLEMEN (350 aa)). Residues 804 to 814 (TTATSLYSSDP) show a composition bias toward polar residues. Over residues 821-834 (ASSSNAAKSNLPKS) the composition is skewed to low complexity. Residues 937–947 (TKKDAQKDQDT) show a composition bias toward basic and acidic residues. The stretch at 991 to 1335 (REAERQLVLR…NEELLWKLQT (345 aa)) forms a coiled coil. Over residues 1348-1369 (SPVYRGSSSGPSSPARVSTTPR) the composition is skewed to low complexity.

It in the C-terminal section; belongs to the MTUS1 family. As to quaternary structure, homodimer. Interacts with KIF2C and MAPRE1; the interaction is direct and probably targets MTUS2 and KIF2C to microtubules. In terms of tissue distribution, detected in embryonic stem cells differentiating to cardiomyocytes.

The protein localises to the cytoplasm. It is found in the cytoskeleton. Functionally, binds microtubules. Together with MAPRE1 may target the microtubule depolymerase KIF2C to the plus-end of microtubules. May regulate the dynamics of microtubules at their growing distal tip. This is Microtubule-associated tumor suppressor candidate 2 (MTUS2) from Homo sapiens (Human).